The primary structure comprises 503 residues: Lysine--tRNA ligase (503 aa).

The Mg(2+) site is built by Glu410 and Glu417.

It belongs to the class-II aminoacyl-tRNA synthetase family. As to quaternary structure, homodimer. Requires Mg(2+) as cofactor.

It is found in the cytoplasm. The catalysed reaction is tRNA(Lys) + L-lysine + ATP = L-lysyl-tRNA(Lys) + AMP + diphosphate. The chain is Lysine--tRNA ligase from Prochlorococcus marinus (strain MIT 9211).